The sequence spans 871 residues: DNA mismatch repair protein MutS (871 aa).

620-627 contributes to the ATP binding site; the sequence is GPNMGGKS. The segment at 806–837 is disordered; sequence HHGGLNEPKQATMELTPPPEAIPSHTEKRNPL.

This sequence belongs to the DNA mismatch repair MutS family.

Functionally, this protein is involved in the repair of mismatches in DNA. It is possible that it carries out the mismatch recognition step. This protein has a weak ATPase activity. The protein is DNA mismatch repair protein MutS of Idiomarina loihiensis (strain ATCC BAA-735 / DSM 15497 / L2-TR).